The chain runs to 136 residues: uncharacterized protein (136 aa).

Helical transmembrane passes span 36-56 and 63-83; these read FLLT…IYLI and FAFA…LFLS.

The protein resides in the cell membrane. This is an uncharacterized protein from Mycoplasma pneumoniae (strain ATCC 29342 / M129 / Subtype 1) (Mycoplasmoides pneumoniae).